Here is a 38-residue protein sequence, read N- to C-terminus: Photosystem II reaction center protein Y (38 aa).

The Lumenal segment spans residues 1 to 4 (MSMR). A helical transmembrane segment spans residues 5-23 (LVVVLLPLGIALGWAVYNI). At 24 to 38 (GKLAIEQWRRTGSKV) the chain is on the stromal side.

This sequence belongs to the PsbY family. In terms of assembly, PSII is composed of 1 copy each of membrane proteins PsbA, PsbB, PsbC, PsbD, PsbE, PsbF, PsbH, PsbI, PsbJ, PsbK, PsbL, PsbM, PsbT, PsbX, PsbY, PsbZ, Psb30/Ycf12, at least 3 peripheral proteins of the oxygen-evolving complex and a large number of cofactors. It forms dimeric complexes.

Its subcellular location is the plastid. It localises to the cyanelle thylakoid membrane. In terms of biological role, loosely associated component of the core of photosystem II (PSII), it is not always seen in crystals. PSII is a light-driven water plastoquinone oxidoreductase, using light energy to abstract electrons from H(2)O, generating a proton gradient subsequently used for ATP formation. This Cyanophora paradoxa protein is Photosystem II reaction center protein Y.